A 306-amino-acid polypeptide reads, in one-letter code: Pantothenate kinase (306 aa).

ATP is bound at residue 91–98 (GSVAVGKS).

Belongs to the prokaryotic pantothenate kinase family.

The protein localises to the cytoplasm. It catalyses the reaction (R)-pantothenate + ATP = (R)-4'-phosphopantothenate + ADP + H(+). Its pathway is cofactor biosynthesis; coenzyme A biosynthesis; CoA from (R)-pantothenate: step 1/5. This chain is Pantothenate kinase, found in Streptococcus pneumoniae (strain JJA).